The sequence spans 597 residues: FERM domain-containing protein 3 (597 aa).

Residues 32–312 form the FERM domain; sequence MRCTIRLLDD…ENQAFYKYAK (281 aa). The segment at 383-403 is disordered; the sequence is LLPSPSEQEEELPLGEGVPLP. A helical transmembrane segment spans residues 531-551; the sequence is LLVVGLGLLLFVFPLLLLLLE.

As to expression, ovary-specific.

The protein localises to the membrane. In terms of biological role, putative tumor suppressor gene that may be implicated in the origin and progression of lung cancer. The sequence is that of FERM domain-containing protein 3 (FRMD3) from Homo sapiens (Human).